Consider the following 490-residue polypeptide: Betaine aldehyde dehydrogenase (490 aa).

Residues threonine 26, isoleucine 27, and aspartate 93 each coordinate K(+). 150 to 152 (GAW) serves as a coordination point for NAD(+). Lysine 162 (charge relay system) is an active-site residue. 176–179 (KPSE) contributes to the NAD(+) binding site. Valine 180 provides a ligand contact to K(+). 230-233 (GVAS) lines the NAD(+) pocket. A K(+)-binding site is contributed by leucine 246. The active-site Proton acceptor is the glutamate 252. Residues glycine 254, cysteine 286, and glutamate 387 each contribute to the NAD(+) site. Residue cysteine 286 is the Nucleophile of the active site. Cysteine 286 bears the Cysteine sulfenic acid (-SOH) mark. Residues lysine 457 and glycine 460 each coordinate K(+). Residue glutamate 464 is the Charge relay system of the active site.

It belongs to the aldehyde dehydrogenase family. As to quaternary structure, dimer of dimers. The cofactor is K(+).

The enzyme catalyses betaine aldehyde + NAD(+) + H2O = glycine betaine + NADH + 2 H(+). The protein operates within amine and polyamine biosynthesis; betaine biosynthesis via choline pathway; betaine from betaine aldehyde: step 1/1. Its function is as follows. Involved in the biosynthesis of the osmoprotectant glycine betaine. Catalyzes the irreversible oxidation of betaine aldehyde to the corresponding acid. The polypeptide is Betaine aldehyde dehydrogenase (Escherichia coli O157:H7).